Reading from the N-terminus, the 876-residue chain is Alanine--tRNA ligase (876 aa).

Lys74 is subject to N6-acetyllysine. Zn(2+) contacts are provided by His564, His568, Cys666, and His670.

The protein belongs to the class-II aminoacyl-tRNA synthetase family. In terms of assembly, homotetramer. Requires Zn(2+) as cofactor.

Its subcellular location is the cytoplasm. The catalysed reaction is tRNA(Ala) + L-alanine + ATP = L-alanyl-tRNA(Ala) + AMP + diphosphate. In terms of biological role, catalyzes the attachment of alanine to tRNA(Ala) in a two-step reaction: alanine is first activated by ATP to form Ala-AMP and then transferred to the acceptor end of tRNA(Ala). Also edits incorrectly charged Ser-tRNA(Ala) and Gly-tRNA(Ala) via its editing domain. The chain is Alanine--tRNA ligase from Shigella sonnei (strain Ss046).